A 78-amino-acid polypeptide reads, in one-letter code: Sec-independent protein translocase protein TatA (78 aa).

The helical transmembrane segment at 1 to 21 threads the bilayer; sequence MGSLSIWHWIVVIGVVLLLFG. A compositionally biased stretch (basic and acidic residues) spans 42 to 60; that stretch reads GLQDDEKTAEKPEPVKSID. Residues 42-78 form a disordered region; it reads GLQDDEKTAEKPEPVKSIDHTAPPAAAPRTDVGSKVV.

The protein belongs to the TatA/E family. The Tat system comprises two distinct complexes: a TatABC complex, containing multiple copies of TatA, TatB and TatC subunits, and a separate TatA complex, containing only TatA subunits. Substrates initially bind to the TatABC complex, which probably triggers association of the separate TatA complex to form the active translocon.

It is found in the cell inner membrane. Its function is as follows. Part of the twin-arginine translocation (Tat) system that transports large folded proteins containing a characteristic twin-arginine motif in their signal peptide across membranes. TatA could form the protein-conducting channel of the Tat system. The chain is Sec-independent protein translocase protein TatA from Rhodopseudomonas palustris (strain BisB18).